Consider the following 1634-residue polypeptide: MYGYQGTGGQQPLGAQPTGFGFGNTPVQQQQQPMQPMQQSQPTGYQAPGGFQNYQPTGFAQQQQQQQPQQTGFQSMQPPMQQTGFQSQPNVSMYQGGGGQGYQSAPMLHQQTMQTGYQPQQQQPGFTGFQPQQQQQQQQTGFTGFQQQPQQQQPGFTGFQSQPTGYNANASAPAATPAAPLQQQKTGNARDPFAPTLPARPPLTSQPTGGGNKSVVDGVYIPNVRLSFLTADDQRNFENLFRQALPKGEQALSGDKARDILFRSGLPPITLSAIWNLADTTRSGALLFPEFAVAMYLCGQAVKGQTVPNNLSENIKNEVSSMVDIISFNIPDAGSRPSSSGQSVPQSQPQQQQQQSSASMLAGLNLGQPTGYQQQQATGYQPMQQQSTGYPMQAMQPQITGGMPLQQQRTGPMQPLQQQSTGYAPLQSQLTGGAPLQSQLTGGAPLQSQLTGGAPLQSQLTGGAPLQQQSTGYAPLQQQSTGYAPLQQQSTGYMPQQQTGMQPQSTGYGSMQPLTAMPTGKPGQWGFINTPSQGLPGIETMQQRLMPQATGAPVQQLPPMQLQQSATVNWAIAKEEKQIYDGIFMAWDKKRAGAIDGDTAIKIFTQSGLNRADLEAIWTLSDPSNKGRLDRDEFAVAMHLIYRHLNGYPIPSRLPPELVPPSSKNFSDSVNQVKSYLKAGGGRTGGSKLKSRSFTGDSTIKKDATVFKNDDSDFGYTSRNRRGGSSSTASSNGSSGNDISLSGKGSSISELKKLIREKQILLDAIDAEDSDMSRDSNLERRDQEAVADLKRRIQNVQRDIDVAPHSAISTDVGASADAKRNLMRKLDHLGDRLPQLASNVRRIEDKIANAKMELFRLKNPTSLVGTGPGGAITEADRIKARSKAKLQARMAALTGKGTTTGADASEEEDYEHRLLTHTSEVERSKAQNYEMIHDIEDSVKSLQRDLSSKLRETQEEVSEDRQRRRWEEAVGVEDDVRQFIYSLRSTRSSRPAPATASSSAPATGSPATAAPISATSTGASTPSAPAAGVDRKAQLKAEAERKMNERLAALGIKRKEKAQAHGFAPPDAKPAEASPAASPAVASPAVASPAATPAVSSPAPVSRGVPAPAAATPATDPATTPAVPVSAPADDSDSDDEEYEKLMAQKREQEERFKKQQEADKKKEEEKKQKKAAKEERMRKLREEMEANEAREKAWKESQSKEAEADEAEGDVGAAALAAFSNKATAPSTTPTAVAATPPVATSTPSPAAPTVPAADDNNPFHRLNNGGDAAAAAPAAGGEDNNPFLRPGTNQPIAAPSPASFSEAPKEAPKPVDPVKISNQRANQRAAKNDDDDWGMSSDEDDDQDYHRGNAAELASQLFRTMAPPIQRQPTGGAPITATPTGSAPAAPPAAPPVAPAAVEVAVAASEATPGPESAPPAPPMPEINIPPATEAPSAPAATEAPPAPPSAPTTIETTHLPPPVDTHNDMSSSEFDFETPEGSPTQQTFAEAAPPVAAPPPPPPTAAAAAPTGIPPPPPSAPGFGAPEAPSGIPPPPPPAPGFGAPPPPPGPAPSFDAPGGAPPPPPPGPPPPMFGAPAPPSMTGPSAGDLPERPPAATGGITALLGEITGGKTLRRVDDKDKKISSNPSAGAVLN.

Positions 1 to 11 (MYGYQGTGGQQ) are enriched in gly residues. The tract at residues 1–215 (MYGYQGTGGQ…QPTGGGNKSV (215 aa)) is disordered. Low complexity-rich tracts occupy residues 28–42 (QQQQ…QSQP) and 55–74 (QPTG…TGFQ). Over residues 75 to 93 (SMQPPMQQTGFQSQPNVSM) the composition is skewed to polar residues. Positions 110-180 (QQTMQTGYQP…SAPAATPAAP (71 aa)) are enriched in low complexity. The 90-residue stretch at 233-322 (DQRNFENLFR…ENIKNEVSSM (90 aa)) folds into the EH 1 domain. One can recognise an EF-hand 1 domain in the interval 266–301 (LPPITLSAIWNLADTTRSGALLFPEFAVAMYLCGQA). Disordered stretches follow at residues 330–471 (IPDA…QQST) and 492–522 (GYMP…TGKP). Low complexity-rich tracts occupy residues 335–359 (SRPS…SSAS) and 368–386 (QPTG…MQQQ). 2 stretches are compositionally biased toward polar residues: residues 387-471 (STGY…QQST) and 492-513 (GYMP…SMQP). Residues 576 to 665 (EKQIYDGIFM…PELVPPSSKN (90 aa)) enclose the EH 2 domain. Residues 609–644 (LNRADLEAIWTLSDPSNKGRLDRDEFAVAMHLIYRH) enclose the EF-hand 2 domain. Residues 711–744 (DSDFGYTSRNRRGGSSSTASSNGSSGNDISLSGK) are disordered. The span at 723–737 (GGSSSTASSNGSSGN) shows a compositional bias: low complexity. Coiled coils occupy residues 748–803 (ISEL…IDVA) and 831–859 (DRLP…RLKN). 2 disordered regions span residues 946–965 (LSSK…QRRR) and 985–1634 (STRS…AVLN). The segment covering 985 to 1028 (STRSSRPAPATASSSAPATGSPATAAPISATSTGASTPSAPAAG) has biased composition (low complexity). Positions 1029-1045 (VDRKAQLKAEAERKMNE) are enriched in basic and acidic residues. Residues 1071 to 1129 (AEASPAASPAVASPAVASPAATPAVSSPAPVSRGVPAPAAATPATDPATTPAVPVSAPA) are compositionally biased toward low complexity. Over residues 1130-1139 (DDSDSDDEEY) the composition is skewed to acidic residues. Residues 1131–1198 (DSDSDDEEYE…EAREKAWKES (68 aa)) are a coiled coil. Residues 1140–1203 (EKLMAQKREQ…AWKESQSKEA (64 aa)) show a composition bias toward basic and acidic residues. Composition is skewed to low complexity over residues 1211–1255 (DVGA…VPAA), 1265–1284 (NNGG…DNNP), and 1293–1304 (PIAAPSPASFSE). Residues 1331 to 1345 (DDDDWGMSSDEDDDQ) show a composition bias toward acidic residues. Positions 1371–1386 (PTGGAPITATPTGSAP) are enriched in low complexity. Residues 1387-1396 (AAPPAAPPVA) are compositionally biased toward pro residues. The segment covering 1397-1413 (PAAVEVAVAASEATPGP) has biased composition (low complexity). Residues 1414 to 1423 (ESAPPAPPMP) are compositionally biased toward pro residues. A compositionally biased stretch (low complexity) spans 1424–1442 (EINIPPATEAPSAPAATEA). The segment covering 1494–1503 (VAAPPPPPPT) has biased composition (pro residues). Over residues 1520-1529 (PGFGAPEAPS) the composition is skewed to low complexity. 2 stretches are compositionally biased toward pro residues: residues 1530-1551 (GIPP…PGPA) and 1559-1581 (GAPP…PPSM). The WH2 domain occupies 1599 to 1616 (GITALLGEITGGKTLRRV). The segment covering 1614 to 1623 (RRVDDKDKKI) has biased composition (basic and acidic residues).

This sequence belongs to the PAN1 family. Component of the PAN1 actin cytoskeleton-regulatory complex.

It is found in the cell membrane. The protein resides in the endosome membrane. It localises to the cytoplasm. The protein localises to the cytoskeleton. Its subcellular location is the actin patch. In terms of biological role, component of the PAN1 actin cytoskeleton-regulatory complex required for the internalization of endosomes during actin-coupled endocytosis. The complex links the site of endocytosis to the cell membrane-associated actin cytoskeleton. Mediates uptake of external molecules and vacuolar degradation of plasma membrane proteins. Plays a role in the proper organization of the cell membrane-associated actin cytoskeleton and promotes its destabilization. The polypeptide is Actin cytoskeleton-regulatory complex protein PAN1 (PAN1) (Yarrowia lipolytica (strain CLIB 122 / E 150) (Yeast)).